The chain runs to 185 residues: Pap fimbrial major pilin protein (185 aa).

The signal sequence occupies residues 1 to 22; that stretch reads MIKSVIAGAVAMAVVSFGVNNA. A disulfide bridge connects residues cysteine 44 and cysteine 83.

It belongs to the fimbrial protein family.

Its subcellular location is the secreted. The protein localises to the fimbrium. Polymerizes to form the thick (6.8 nm in diameter) rod of the pilus (also called fimbria). The rod is a right-handed helical cylinder with 3.28 PapA subunits per turn. Pili are polar filaments radiating from the surface of the bacterium to a length of 0.5-1.5 micrometers and numbering 100-300 per cell, and enable bacteria to colonize the epithelium of specific host organs. The sequence is that of Pap fimbrial major pilin protein (papA) from Escherichia coli.